Consider the following 429-residue polypeptide: Histidine--tRNA ligase (429 aa).

The protein belongs to the class-II aminoacyl-tRNA synthetase family. In terms of assembly, homodimer.

The protein localises to the cytoplasm. It catalyses the reaction tRNA(His) + L-histidine + ATP = L-histidyl-tRNA(His) + AMP + diphosphate + H(+). The polypeptide is Histidine--tRNA ligase (Stutzerimonas stutzeri (strain A1501) (Pseudomonas stutzeri)).